The chain runs to 274 residues: tRNA-cytidine(32) 2-sulfurtransferase (274 aa).

A PP-loop motif motif is present at residues 40–45; it reads SGGKDS. [4Fe-4S] cluster is bound by residues Cys115, Cys118, and Cys206.

It belongs to the TtcA family. Homodimer. The cofactor is Mg(2+). [4Fe-4S] cluster serves as cofactor.

It localises to the cytoplasm. It carries out the reaction cytidine(32) in tRNA + S-sulfanyl-L-cysteinyl-[cysteine desulfurase] + AH2 + ATP = 2-thiocytidine(32) in tRNA + L-cysteinyl-[cysteine desulfurase] + A + AMP + diphosphate + H(+). Its pathway is tRNA modification. Catalyzes the ATP-dependent 2-thiolation of cytidine in position 32 of tRNA, to form 2-thiocytidine (s(2)C32). The sulfur atoms are provided by the cysteine/cysteine desulfurase (IscS) system. This chain is tRNA-cytidine(32) 2-sulfurtransferase, found in Pseudomonas fluorescens (strain SBW25).